A 354-amino-acid chain; its full sequence is MPGNSFGKMFKLTTFGESHGVAIGGVIDGCPAGLEIDTESVQNDLNRRRPGQSAIVTQRKEPDTVEFLSGIFEGKTTGTPIGFIIKNANQKSKDYSHIKDTYRPSHADYTYDEKYGIRDYRGGGRSSARETACRVVAGSIAKQMLKSVSFNAFVSSVGKIELNKDYSELDFSEIEKNPVRCPDPEMAREMEAYIKEIRGDGDTVGGTVQCVIKNVPIGLGEPVFDKLHAELGKAMLSINAVKGFEYGSGFEGTKMRGSEHNDHFNTDGSTQTNLSGGIQGGISNGMDIYFKVAFKPVATLMQKQQTINSKGDEVEMQGKGRHDPCVVPRAVPIVESMAALVLADYYLQNKSSKI.

Arginine 48 provides a ligand contact to NADP(+). FMN contacts are provided by residues 125–127 (RSS), 239–240 (NA), glycine 280, 295–299 (KPVAT), and arginine 321.

This sequence belongs to the chorismate synthase family. In terms of assembly, homotetramer. FMNH2 is required as a cofactor.

The catalysed reaction is 5-O-(1-carboxyvinyl)-3-phosphoshikimate = chorismate + phosphate. It functions in the pathway metabolic intermediate biosynthesis; chorismate biosynthesis; chorismate from D-erythrose 4-phosphate and phosphoenolpyruvate: step 7/7. In terms of biological role, catalyzes the anti-1,4-elimination of the C-3 phosphate and the C-6 proR hydrogen from 5-enolpyruvylshikimate-3-phosphate (EPSP) to yield chorismate, which is the branch point compound that serves as the starting substrate for the three terminal pathways of aromatic amino acid biosynthesis. This reaction introduces a second double bond into the aromatic ring system. The chain is Chorismate synthase from Christiangramia forsetii (strain DSM 17595 / CGMCC 1.15422 / KT0803) (Gramella forsetii).